A 643-amino-acid chain; its full sequence is Phosphomethylpyrimidine synthase (643 aa).

Substrate contacts are provided by residues Asn248, Met277, Tyr306, His342, 362 to 364, 403 to 406, and Glu442; these read SRG and DGLR. His446 is a binding site for Zn(2+). Position 469 (Tyr469) interacts with substrate. His510 contacts Zn(2+). Residues Cys590, Cys593, and Cys598 each contribute to the [4Fe-4S] cluster site.

It belongs to the ThiC family. In terms of assembly, homodimer. [4Fe-4S] cluster serves as cofactor.

The enzyme catalyses 5-amino-1-(5-phospho-beta-D-ribosyl)imidazole + S-adenosyl-L-methionine = 4-amino-2-methyl-5-(phosphooxymethyl)pyrimidine + CO + 5'-deoxyadenosine + formate + L-methionine + 3 H(+). The protein operates within cofactor biosynthesis; thiamine diphosphate biosynthesis. Its function is as follows. Catalyzes the synthesis of the hydroxymethylpyrimidine phosphate (HMP-P) moiety of thiamine from aminoimidazole ribotide (AIR) in a radical S-adenosyl-L-methionine (SAM)-dependent reaction. This chain is Phosphomethylpyrimidine synthase, found in Paraburkholderia phymatum (strain DSM 17167 / CIP 108236 / LMG 21445 / STM815) (Burkholderia phymatum).